Reading from the N-terminus, the 218-residue chain is Probable signal peptidase I-2 (218 aa).

The Cytoplasmic portion of the chain corresponds to methionine 1–lysine 26. The helical transmembrane segment at threonine 27 to alanine 43 threads the bilayer. The Periplasmic portion of the chain corresponds to glutamate 44 to arginine 218. Catalysis depends on residues serine 52 and lysine 100.

Belongs to the peptidase S26 family.

The protein localises to the cell membrane. The enzyme catalyses Cleavage of hydrophobic, N-terminal signal or leader sequences from secreted and periplasmic proteins.. This Synechocystis sp. (strain ATCC 27184 / PCC 6803 / Kazusa) protein is Probable signal peptidase I-2 (lepB2).